The primary structure comprises 286 residues: Large ribosomal subunit protein uL2 (286 aa).

2 disordered regions span residues 22–59 (KELTPGYTPERSLLRPKTKTGGRNNQGKITSRHRGGGH) and 215–286 (LGRR…KLHK). The span at 230–240 (DHPHGGGEGRT) shows a compositional bias: basic and acidic residues. The segment covering 255-286 (KGGRTRQKRKPSNSSIVRRRKSRRYGQLKLHK) has biased composition (basic residues).

This sequence belongs to the universal ribosomal protein uL2 family. In terms of assembly, part of the 50S ribosomal subunit. Forms a bridge to the 30S subunit in the 70S ribosome.

One of the primary rRNA binding proteins. Required for association of the 30S and 50S subunits to form the 70S ribosome, for tRNA binding and peptide bond formation. It has been suggested to have peptidyltransferase activity; this is somewhat controversial. Makes several contacts with the 16S rRNA in the 70S ribosome. This is Large ribosomal subunit protein uL2 from Rhodopirellula baltica (strain DSM 10527 / NCIMB 13988 / SH1).